Here is a 291-residue protein sequence, read N- to C-terminus: Cilia- and flagella-associated protein 298 (291 aa).

The protein belongs to the CFAP298 family.

This chain is Cilia- and flagella-associated protein 298, found in Drosophila melanogaster (Fruit fly).